We begin with the raw amino-acid sequence, 116 residues long: U16-barytoxin-Tl1b (116 aa).

Positions 1–20 are cleaved as a signal peptide; that stretch reads MKTIIVFLSLLVLATKFGDA. A propeptide spanning residues 21–74 is cleaved from the precursor; it reads KEGVNQKQKKEVTQNEFREEYLNEMAAMSLVQQLEAIERALFENEAGRNSRQKR. Disulfide bonds link cysteine 75–cysteine 90, cysteine 82–cysteine 95, and cysteine 89–cysteine 110.

The protein belongs to the neurotoxin 14 (magi-1) family. 06 (ICK-Trit) subfamily. Expressed by the venom gland.

It localises to the secreted. Functionally, ion channel inhibitor. This Trittame loki (Brush-footed trapdoor spider) protein is U16-barytoxin-Tl1b.